The following is a 215-amino-acid chain: Sodium channel regulatory subunit beta-3 (215 aa).

The N-terminal stretch at 1–24 (MPAFNRLLPLASLVLIYWVRVCFP) is a signal peptide. Residues 25–138 (VCVEVPSETE…EAHRPFVKTT (114 aa)) form the Ig-like C2-type domain. The Extracellular segment spans residues 25–156 (VCVEVPSETE…EEAGEDFTSV (132 aa)). Cystine bridges form between C26-C48 and C45-C120. N-linked (GlcNAc...) asparagine glycosylation is found at N95, N109, N113, and N121. The helical transmembrane segment at 157–178 (VSEIMMYILLVFLTLWLFIEMI) threads the bilayer. Residues 179-215 (YCYRKVSKAEEAAQENASDYLAIPSENKENSVVPVEE) are Cytoplasmic-facing.

It belongs to the sodium channel auxiliary subunit SCN3B (TC 8.A.17) family. A voltage-gated sodium (Nav) channel consists of an ion-conducting pore-forming alpha subunit functional on its own that is regulated by one or more beta subunits. Forms homodimers and homotrimers. SCN3B is non-covalently associated with alpha subunits and induces the formation of alpha subunit oligomers, including trimers. Interacts with SCN5A/Nav1.5; regulatory subunit of SCN5A/Nav1.5. Interacts with SCN7A/Nav2.1; probable regulatory subunit of SCN7A/Nav2.1. Interacts with SCN10A; regulatory subunit of SCN10A/Nav1.8. Interacts with NFASC; probably involved in targeting the sodium channels to the nodes of Ranvier. In terms of processing, intramolecular disulfide bonds favor the voltage-gated sodium channel oligomeric complex assembly. N-glycosylated. In terms of tissue distribution, expressed broadly in neurons in the central and peripheral nervous systems, but not in glia and most non-neuronal cells. Weak detection in lung and adrenal gland.

It is found in the cell membrane. Regulatory subunit of multiple voltage-gated sodium (Nav) channels directly mediating the depolarization of excitable membranes. Navs, also called VGSCs (voltage-gated sodium channels) or VDSCs (voltage-dependent sodium channels), operate by switching between closed and open conformations depending on the voltage difference across the membrane. In the open conformation they allow Na(+) ions to selectively pass through the pore, along their electrochemical gradient. The influx of Na+ ions provokes membrane depolarization, initiating the propagation of electrical signals throughout cells and tissues. The accessory beta subunits participate in localization and functional modulation of the Nav channels. Voltage-gated sodium channels regulatory subunit that modulates channel gating kinetics. Modulates the activity of SCN2A/Nav1.2, causing a hyperpolarizing shift in the voltage-dependence of inactivation and increasing the fraction of channels operating in the fast gating mode. Also able to induce unique persistent SCN2A/Nav1.2-mediated sodium currents. Could modulate the activity of SCN10A/Nav1.8. The chain is Sodium channel regulatory subunit beta-3 from Rattus norvegicus (Rat).